Reading from the N-terminus, the 198-residue chain is MICOS complex subunit MIC26 (198 aa).

The N-terminal stretch at 1-25 (MFKVIHRYVGPASLSLLTFKVYASS) is a signal peptide. Residues 108-128 (PGFFPRLGVIGFAGVVGLVLA) form a helical membrane-spanning segment. Residue S162 is glycosylated (O-linked (Xyl...) (chondroitin sulfate) serine).

This sequence belongs to the apolipoprotein O/MICOS complex subunit Mic27 family. Component of the mitochondrial contact site and cristae organizing system (MICOS) complex, composed of at least MICOS10/MIC10, CHCHD3/MIC19, CHCHD6/MIC25, APOOL/MIC27, IMMT/MIC60, APOO/MIC23/MIC26 and MICOS13/MIC13. This complex was also known under the names MINOS or MitOS complex. The MICOS complex associates with mitochondrial outer membrane proteins SAMM50, MTX1 and MTX2 (together described as components of the mitochondrial outer membrane sorting assembly machinery (SAM) complex) and DNAJC11, mitochondrial inner membrane protein TMEM11 and with HSPA9. The MICOS and SAM complexes together with DNAJC11 are part of a large protein complex spanning both membranes termed the mitochondrial intermembrane space bridging (MIB) complex. Interacts with IMMT/MIC60. Interacts with MICOS10/MIC10 and APOOL/MIC27. In terms of processing, O-glycosylation; glycosaminoglycan of chondroitin-sulfate type.

Its subcellular location is the mitochondrion inner membrane. The protein resides in the secreted. It localises to the mitochondrion. The protein localises to the endoplasmic reticulum membrane. It is found in the golgi apparatus membrane. Functionally, component of the MICOS complex, a large protein complex of the mitochondrial inner membrane that plays crucial roles in the maintenance of crista junctions, inner membrane architecture, and formation of contact sites to the outer membrane. Plays a crucial role in crista junction formation and mitochondrial function. Can induce cardiac lipotoxicity by enhancing mitochondrial respiration and fatty acid metabolism in cardiac myoblasts. Promotes cholesterol efflux from macrophage cells. Detected in HDL, LDL and VLDL. Secreted by a microsomal triglyceride transfer protein (MTTP)-dependent mechanism, probably as a VLDL-associated protein that is subsequently transferred to HDL. This Bos taurus (Bovine) protein is MICOS complex subunit MIC26 (APOO).